The sequence spans 363 residues: MKKKFRIAVLPGDGIGPEIMREAYKILNILEKNFSLPLEIREFSVGGIAIDREGIALPEETLRGCENSDAILFGSVGGKKWDYLPIESRPERASLLPLRKHFNLFSNLRPAKLYSDLKNLSPLRSNIVRNGFDILCVRELTGGIYFGKPKGRSKNENGEYSFDTEIYYDFEIKRIAHLAFELASSRRCKVCSIDKSNVLASSILWREIVEEVSKNYPNIILSHLYIDNACMQIIKNPSQFDVLLCSNIFGDIISDECAMITGSIGMLPSASLNSKKFGLYEPAGGSAPDIEGKNIANPIAQILSLSMLIRHSMNLNEIADKIDSSVYRALKAGYRTLDISDGKNYIKTNEMGDIIAKFLINGK.

78–91 (GKKWDYLPIESRPE) contributes to the NAD(+) binding site. Residues R99, R109, R138, and D227 each contribute to the substrate site. Mg(2+)-binding residues include D227, D251, and D255. 285–297 (GSAPDIEGKNIAN) contributes to the NAD(+) binding site.

The protein belongs to the isocitrate and isopropylmalate dehydrogenases family. LeuB type 1 subfamily. Homodimer. Mg(2+) serves as cofactor. It depends on Mn(2+) as a cofactor.

The protein resides in the cytoplasm. The catalysed reaction is (2R,3S)-3-isopropylmalate + NAD(+) = 4-methyl-2-oxopentanoate + CO2 + NADH. It participates in amino-acid biosynthesis; L-leucine biosynthesis; L-leucine from 3-methyl-2-oxobutanoate: step 3/4. In terms of biological role, catalyzes the oxidation of 3-carboxy-2-hydroxy-4-methylpentanoate (3-isopropylmalate) to 3-carboxy-4-methyl-2-oxopentanoate. The product decarboxylates to 4-methyl-2 oxopentanoate. This Buchnera aphidicola subsp. Rhopalosiphum padi protein is 3-isopropylmalate dehydrogenase (leuB).